Here is a 214-residue protein sequence, read N- to C-terminus: UPF0301 protein NFA_55110 (214 aa).

Positions 1–24 are disordered; it reads MARADDPDERKTQGGHGDRRRREF.

Belongs to the UPF0301 (AlgH) family.

The polypeptide is UPF0301 protein NFA_55110 (Nocardia farcinica (strain IFM 10152)).